We begin with the raw amino-acid sequence, 798 residues long: ATP-dependent RecD2 DNA helicase (798 aa).

Position 370–374 (370–374 (GTGKT)) interacts with ATP.

This sequence belongs to the RecD family. RecD2 subfamily. Interacts with SSB (sbbA).

It is found in the cytoplasm. It localises to the nucleoid. The enzyme catalyses Couples ATP hydrolysis with the unwinding of duplex DNA at the replication fork by translocating in the 5'-3' direction. This creates two antiparallel DNA single strands (ssDNA). The leading ssDNA polymer is the template for DNA polymerase III holoenzyme which synthesizes a continuous strand.. It catalyses the reaction ATP + H2O = ADP + phosphate + H(+). Functionally, in vivo may favor replication restart by preventing RecA from binding to blocked replication forks, avoiding unnecessary recombination during replication restart. Acts as a negative modulator of the RecA-ssDNA filament, may dissasemble RecA threads, can act as both a positive and negative regulator of strand exchange. Probably stabilizes or aids normal replication fork progression, is important for survival after treatment with DNA-damaging agents that can result in replication fork stress. Overcomes the inhibition of replication restart by RecA/RecO, probably by displacing RecA. Increasing levels inhibit PriA-dependent DNA replication initiation (but have little effect on ongoing replication) in vitro; may act by disturbing SsbA assembly. Probably has a role in recombinational DNA repair. Does not seem to contribute to mismatch repair. Has 5'-3' helicase activity that is probably ATP-dependent. This is ATP-dependent RecD2 DNA helicase from Bacillus subtilis (strain 168).